A 380-amino-acid chain; its full sequence is Probable acyl-CoA dehydrogenase YngJ (380 aa).

FAD-binding positions include 123–132 (FGLTEPNAGS), 156–158 (WIT), Arg269, and 337–341 (QIHGG). Residue Glu364 is the Proton acceptor of the active site. 366-368 (TSE) provides a ligand contact to FAD.

This sequence belongs to the acyl-CoA dehydrogenase family. FAD serves as cofactor.

The enzyme catalyses a 2,3-saturated acyl-CoA + A = a 2,3-dehydroacyl-CoA + AH2. This chain is Probable acyl-CoA dehydrogenase YngJ (yngJ), found in Bacillus subtilis (strain 168).